The following is a 727-amino-acid chain: Testis anion transporter 1 (727 aa).

The Cytoplasmic portion of the chain corresponds to 1-23; the sequence is MLTIFPFLEWMCMYRLKDWLLGD. Residues 24 to 44 form a helical membrane-spanning segment; the sequence is LLAGISVGLVQVPQGLTLSLL. Residues 45–47 lie on the Extracellular side of the membrane; sequence ARQ. The chain crosses the membrane as a helical span at residues 48–68; that stretch reads LIPPLNIAYAAFCSSVIYVIF. Over 69–74 the chain is Cytoplasmic; it reads GSCHQM. The chain crosses the membrane as a helical span at residues 75 to 95; sequence SIGSFFLVSALLINVLKISPL. The Extracellular portion of the chain corresponds to 96 to 130; it reads NNGHLVMGSFLKDEFSAPSYLMGYNKSLSVVATTT. N120 carries an N-linked (GlcNAc...) asparagine glycan. A helical transmembrane segment spans residues 131-151; the sequence is FLTGIIQLIMGVLGLGFIATY. Over 152–160 the chain is Cytoplasmic; sequence LPESAMSAY. A helical membrane pass occupies residues 161–181; sequence LAAVALHIMLSQLTCIFGIMI. Over 182 to 198 the chain is Extracellular; sequence SFHAGPISFFYDIINYC. Residues 199–219 form a helical membrane-spanning segment; it reads VALPKANSTSILLFLTVVVAL. Residues 220–235 lie on the Cytoplasmic side of the membrane; sequence RINKCIRISFNQYPIE. Residues 236–256 traverse the membrane as a helical segment; that stretch reads FPMELFLIIGFTVIGNKITMA. At 257-283 the chain is on the extracellular side; it reads TETSQTLIDMIPYSFLFPVTPDFSVLP. A helical membrane pass occupies residues 284–304; the sequence is KIILQAISLSLVSSFLLVFLG. Over 305–360 the chain is Cytoplasmic; sequence KKIASLHNYSVNSNQDLIAIGLCNVVSSFFRSCVFTGAVARTIIQDKSGGRQQFAS. A helical membrane pass occupies residues 361–381; sequence LVGAGVMLLLMVKMGHFFYAL. At 382-383 the chain is on the extracellular side; sequence PN. The chain crosses the membrane as a helical span at residues 384–404; sequence AVLAGIILSNVVPYLETISNL. The Cytoplasmic segment spans residues 405-424; sequence PSLWRQDQYDCALWMMTFSS. A helical membrane pass occupies residues 425–445; it reads SIFLGLDIGLIISVVSAFFIT. The Extracellular portion of the chain corresponds to 446–727; the sequence is SVRSHRAKIL…LPSFHLQHIF (282 aa). The STAS domain maps to 471–722; sequence DYREIITIPG…NSLSRLPSFH (252 aa). Positions 592-727 are interaction with RACGAP1; that stretch reads TVSSMSQKNQ…LPSFHLQHIF (136 aa).

It belongs to the SLC26A/SulP transporter (TC 2.A.53) family. Interacts with RACGAP1. Interacts with CFTR; stimulates anion transport activity of CFTR. Post-translationally, N-glycosylated.

The protein localises to the membrane. The enzyme catalyses sulfate(out) + chloride(in) = sulfate(in) + chloride(out). The catalysed reaction is oxalate(in) + chloride(out) = oxalate(out) + chloride(in). In terms of biological role, antiporter that mediates the exchange of sulfate and oxalate against chloride ions across a membrane. Stimulates anion transport activity of CFTR. May cooperate with CFTR in the regulation of chloride and bicarbonate ions fluxes required for activation of the ADCY10/PKA pathway during sperm motility and sperm capacitation. May play a role in sperm tail differentiation and motility and hence male fertility. The polypeptide is Testis anion transporter 1 (Macaca fascicularis (Crab-eating macaque)).